A 660-amino-acid chain; its full sequence is Pseudouridylate synthase 7 homolog (660 aa).

The disordered stretch occupies residues 1–99 (MEMTSTSLKR…EAGEEEEAES (99 aa)). Serine 7 carries the post-translational modification Phosphoserine. Over residues 22–32 (TPHDETKKQKV) the composition is skewed to basic and acidic residues. The span at 76–99 (QEEEEEEEEEDGLSEAGEEEEAES) shows a compositional bias: acidic residues. A Phosphoserine modification is found at serine 126. Residue aspartate 293 is the Nucleophile of the active site. Positions 369–579 (GFINYYGMQR…SGAYRRIIIR (211 aa)) constitute a TRUD domain.

It belongs to the pseudouridine synthase TruD family. Interacts with SIRT1.

Its subcellular location is the nucleus. It carries out the reaction a uridine in tRNA = a pseudouridine in tRNA. The enzyme catalyses uridine(13) in tRNA = pseudouridine(13) in tRNA. It catalyses the reaction a uridine in mRNA = a pseudouridine in mRNA. In terms of biological role, pseudouridylate synthase that catalyzes pseudouridylation of RNAs. Acts as a regulator of protein synthesis in embryonic stem cells by mediating pseudouridylation of RNA fragments derived from tRNAs (tRFs): pseudouridylated tRFs inhibit translation by targeting the translation initiation complex. Also catalyzes pseudouridylation of mRNAs: mediates pseudouridylation of mRNAs with the consensus sequence 5'-UGUAG-3'. Acts as a regulator of pre-mRNA splicing by mediating pseudouridylation of pre-mRNAs at locations associated with alternatively spliced regions. Pseudouridylation of pre-mRNAs near splice sites directly regulates mRNA splicing and mRNA 3'-end processing. In addition to mRNAs and tRNAs, binds other types of RNAs, such as snRNAs, Y RNAs and vault RNAs, suggesting that it can catalyze pseudouridylation of many RNA types. The sequence is that of Pseudouridylate synthase 7 homolog from Mus musculus (Mouse).